Reading from the N-terminus, the 127-residue chain is Small ribosomal subunit protein uS11 (127 aa).

This sequence belongs to the universal ribosomal protein uS11 family. In terms of assembly, part of the 30S ribosomal subunit. Interacts with proteins S7 and S18. Binds to IF-3.

Functionally, located on the platform of the 30S subunit, it bridges several disparate RNA helices of the 16S rRNA. Forms part of the Shine-Dalgarno cleft in the 70S ribosome. This Ruthia magnifica subsp. Calyptogena magnifica protein is Small ribosomal subunit protein uS11.